A 262-amino-acid chain; its full sequence is Acyl-[acyl-carrier-protein]--UDP-N-acetylglucosamine O-acyltransferase (262 aa).

It belongs to the transferase hexapeptide repeat family. LpxA subfamily. Homotrimer.

The protein resides in the cytoplasm. It catalyses the reaction a (3R)-hydroxyacyl-[ACP] + UDP-N-acetyl-alpha-D-glucosamine = a UDP-3-O-[(3R)-3-hydroxyacyl]-N-acetyl-alpha-D-glucosamine + holo-[ACP]. Its pathway is glycolipid biosynthesis; lipid IV(A) biosynthesis; lipid IV(A) from (3R)-3-hydroxytetradecanoyl-[acyl-carrier-protein] and UDP-N-acetyl-alpha-D-glucosamine: step 1/6. In terms of biological role, involved in the biosynthesis of lipid A, a phosphorylated glycolipid that anchors the lipopolysaccharide to the outer membrane of the cell. In Histophilus somni (strain 2336) (Haemophilus somnus), this protein is Acyl-[acyl-carrier-protein]--UDP-N-acetylglucosamine O-acyltransferase.